The chain runs to 63 residues: Large ribosomal subunit protein uL29 (63 aa).

The protein belongs to the universal ribosomal protein uL29 family.

The chain is Large ribosomal subunit protein uL29 from Shewanella frigidimarina (strain NCIMB 400).